The following is a 775-amino-acid chain: 5-methyltetrahydropteroyltriglutamate--homocysteine methyltransferase (775 aa).

5-methyltetrahydropteroyltri-L-glutamate-binding positions include 16–19 and lysine 115; that span reads REMK. Residues 435–437 and glutamate 488 each bind L-homocysteine; that span reads IGS. L-methionine-binding positions include 435-437 and glutamate 488; that span reads IGS. 5-methyltetrahydropteroyltri-L-glutamate-binding positions include 519–520 and tryptophan 565; that span reads RC. Aspartate 603 contacts L-homocysteine. Aspartate 603 serves as a coordination point for L-methionine. Residue glutamate 609 coordinates 5-methyltetrahydropteroyltri-L-glutamate. 3 residues coordinate Zn(2+): histidine 645, cysteine 647, and glutamate 669. The Proton donor role is filled by histidine 698. Cysteine 730 provides a ligand contact to Zn(2+).

This sequence belongs to the vitamin-B12 independent methionine synthase family. Requires Zn(2+) as cofactor.

It carries out the reaction 5-methyltetrahydropteroyltri-L-glutamate + L-homocysteine = tetrahydropteroyltri-L-glutamate + L-methionine. The protein operates within amino-acid biosynthesis; L-methionine biosynthesis via de novo pathway; L-methionine from L-homocysteine (MetE route): step 1/1. Catalyzes the transfer of a methyl group from 5-methyltetrahydrofolate to homocysteine resulting in methionine formation. The polypeptide is 5-methyltetrahydropteroyltriglutamate--homocysteine methyltransferase (Coxiella burnetii (strain CbuG_Q212) (Coxiella burnetii (strain Q212))).